Reading from the N-terminus, the 417-residue chain is Serine hydroxymethyltransferase (417 aa).

Residues Leu-121 and 125 to 127 contribute to the (6S)-5,6,7,8-tetrahydrofolate site; that span reads GHL. Lys-229 carries the N6-(pyridoxal phosphate)lysine modification. 355 to 357 provides a ligand contact to (6S)-5,6,7,8-tetrahydrofolate; that stretch reads SPF.

This sequence belongs to the SHMT family. Homodimer. Pyridoxal 5'-phosphate is required as a cofactor.

The protein resides in the cytoplasm. The enzyme catalyses (6R)-5,10-methylene-5,6,7,8-tetrahydrofolate + glycine + H2O = (6S)-5,6,7,8-tetrahydrofolate + L-serine. It functions in the pathway one-carbon metabolism; tetrahydrofolate interconversion. The protein operates within amino-acid biosynthesis; glycine biosynthesis; glycine from L-serine: step 1/1. Functionally, catalyzes the reversible interconversion of serine and glycine with tetrahydrofolate (THF) serving as the one-carbon carrier. This reaction serves as the major source of one-carbon groups required for the biosynthesis of purines, thymidylate, methionine, and other important biomolecules. Also exhibits THF-independent aldolase activity toward beta-hydroxyamino acids, producing glycine and aldehydes, via a retro-aldol mechanism. The chain is Serine hydroxymethyltransferase from Buchnera aphidicola subsp. Baizongia pistaciae (strain Bp).